Consider the following 279-residue polypeptide: Four and a half LIM domains protein 2 (279 aa).

Residues 7–31 (CHHCNESLFGKKYILREESPYCVVC) form a C4-type zinc finger. LIM zinc-binding domains are found at residues 40–92 (CEEC…CTDC), 101–153 (CQEC…CVPC), and 162–212 (CVQC…CLNC). Residue Lys-78 forms a Glycyl lysine isopeptide (Lys-Gly) (interchain with G-Cter in SUMO2) linkage. Residues Lys-167 and Lys-220 each participate in a glycyl lysine isopeptide (Lys-Gly) (interchain with G-Cter in SUMO2) cross-link. The region spanning 221–275 (CAGCTNPISGLGGTKYISFEERQWHNDCFNCKKCSLSLVGRGFLTERDDILCPDC) is the LIM zinc-binding 4 domain. The residue at position 238 (Ser-238) is a Phosphoserine.

As to quaternary structure, interacts with ZNF638 and TTN/titin. Interacts with E4F1. Interacts with GRB7. Interacts with SIRT1 and FOXO1. Interacts with CEFIP. Interacts with calcineurin. Interacts with FOXK1. Expressed in skeletal muscle and heart.

The protein resides in the cytoplasm. The protein localises to the nucleus. It is found in the myofibril. Its subcellular location is the sarcomere. It localises to the z line. Functionally, may function as a molecular transmitter linking various signaling pathways to transcriptional regulation. Negatively regulates the transcriptional repressor E4F1 and may function in cell growth. Inhibits the transcriptional activity of FOXO1 and its apoptotic function by enhancing the interaction of FOXO1 with SIRT1 and FOXO1 deacetylation. Negatively regulates the calcineurin/NFAT signaling pathway in cardiomyocytes. The sequence is that of Four and a half LIM domains protein 2 (FHL2) from Homo sapiens (Human).